We begin with the raw amino-acid sequence, 541 residues long: Chaperonin GroEL (541 aa).

ATP contacts are provided by residues 29–32, 86–90, Gly-413, and Asp-495; these read TLGP and DGTTT.

The protein belongs to the chaperonin (HSP60) family. Forms a cylinder of 14 subunits composed of two heptameric rings stacked back-to-back. Interacts with the co-chaperonin GroES.

The protein localises to the cytoplasm. The catalysed reaction is ATP + H2O + a folded polypeptide = ADP + phosphate + an unfolded polypeptide.. Its function is as follows. Together with its co-chaperonin GroES, plays an essential role in assisting protein folding. The GroEL-GroES system forms a nano-cage that allows encapsulation of the non-native substrate proteins and provides a physical environment optimized to promote and accelerate protein folding. The chain is Chaperonin GroEL from Thermoanaerobacter pseudethanolicus (strain ATCC 33223 / 39E) (Clostridium thermohydrosulfuricum).